A 199-amino-acid chain; its full sequence is Nucleoside triphosphate pyrophosphatase (199 aa).

The Proton acceptor role is filled by D76.

This sequence belongs to the Maf family. Requires a divalent metal cation as cofactor.

The protein resides in the cytoplasm. The catalysed reaction is a ribonucleoside 5'-triphosphate + H2O = a ribonucleoside 5'-phosphate + diphosphate + H(+). The enzyme catalyses a 2'-deoxyribonucleoside 5'-triphosphate + H2O = a 2'-deoxyribonucleoside 5'-phosphate + diphosphate + H(+). Its function is as follows. Nucleoside triphosphate pyrophosphatase. May have a dual role in cell division arrest and in preventing the incorporation of modified nucleotides into cellular nucleic acids. In Ruegeria pomeroyi (strain ATCC 700808 / DSM 15171 / DSS-3) (Silicibacter pomeroyi), this protein is Nucleoside triphosphate pyrophosphatase.